The following is a 151-amino-acid chain: Desiccation-related protein PCC27-45 (151 aa).

It belongs to the LEA type 2 family.

The sequence is that of Desiccation-related protein PCC27-45 from Craterostigma plantagineum (Blue gem).